The primary structure comprises 112 residues: UPF0342 protein SUB0718 (112 aa).

This sequence belongs to the UPF0342 family.

This chain is UPF0342 protein SUB0718, found in Streptococcus uberis (strain ATCC BAA-854 / 0140J).